Here is a 220-residue protein sequence, read N- to C-terminus: Small ribosomal subunit protein eS8 (220 aa).

It belongs to the eukaryotic ribosomal protein eS8 family.

The protein is Small ribosomal subunit protein eS8 (RPS8A) of Leishmania major.